Consider the following 611-residue polypeptide: Phosphatidylinositol 3,4,5-trisphosphate 3-phosphatase and protein-tyrosine-phosphatase PTEN2A (611 aa).

Disordered stretches follow at residues 1-42 (MSSE…GVAS) and 87-109 (GIRL…SSAT). Ser-91 bears the Phosphoserine mark. The span at 100–109 (TTTEGTSSAT) shows a compositional bias: low complexity. Residues 145–324 (RRYQEGGFDL…KYFERILTYF (180 aa)) form the Phosphatase tensin-type domain. Cys-263 acts as the Phosphocysteine intermediate in catalysis. The region spanning 331–458 (GRRCMLRGFR…FMVEVVLADI (128 aa)) is the C2 tensin-type domain. Residues 462 to 486 (IPTNPSSETASKTPEETSAANSSPV) are compositionally biased toward polar residues. The tract at residues 462–589 (IPTNPSSETA…VNASSSSESE (128 aa)) is disordered. Basic and acidic residues predominate over residues 495–507 (PDKETENPDKDDV). A Phosphoserine modification is found at Ser-509. 2 stretches are compositionally biased toward polar residues: residues 514-530 (DSTG…SQTP) and 549-565 (VSIS…QGVT).

This sequence belongs to the PTEN phosphatase protein family. Expressed in seedlings, roots, stems, leaves, flowers and siliques. However, at protein level, not observed in older leaves and mature siliques.

It catalyses the reaction O-phospho-L-tyrosyl-[protein] + H2O = L-tyrosyl-[protein] + phosphate. It carries out the reaction a 1,2-diacyl-sn-glycero-3-phospho-(1D-myo-inositol-3,4,5-trisphosphate) + H2O = a 1,2-diacyl-sn-glycero-3-phospho-(1D-myo-inositol-4,5-bisphosphate) + phosphate. Binds phosphatidic acid. Protein tyrosine phosphatase that also exhibits lipid phosphatase activity. Hydrolyzed poorly p-nitrophenyl phosphate (p-NPP). Can use PtdIns isomers as substrates. Removes efficiently phosphate from the D3 position of the inositol ring, less from the D4 position and not at all from the D5 position on monophosphorylated PtdIns isomers (PIPs). The presence of a phosphate group in the D5 position on PIP(2) isomers reduces lipid phosphatase activity. Mostly active on PtdIns(3)P and PtdIns(3,4)P(2), to a lower extent, on PtdIns(4)P and PtdIns(3,5)P(2), but barely against PtdIns(3,4,5)P(3) as substrate. The protein is Phosphatidylinositol 3,4,5-trisphosphate 3-phosphatase and protein-tyrosine-phosphatase PTEN2A of Arabidopsis thaliana (Mouse-ear cress).